Here is a 118-residue protein sequence, read N- to C-terminus: Immunoglobulin heavy variable 4-30-2 (118 aa).

A signal peptide spans 1 to 19 (MKHLWFFLLLVAAPRWVLS). The framework-1 stretch occupies residues 20 to 44 (QLQLQESGSGLVKPSQTLSLTCAVS). The Ig-like domain maps to 20-118 (QLQLQESGSG…ADTAVYYCAR (99 aa)). Cysteine 41 and cysteine 116 are oxidised to a cystine. The segment at 45-54 (GGSISSGGYS) is complementarity-determining-1. The interval 55 to 71 (WSWIRQPPGKGLEWIGY) is framework-2. The tract at residues 72–78 (IYHSGST) is complementarity-determining-2. Residues 79–116 (YYNPSLKSRVTISVDRSKNQFSLKLSSVTAADTAVYYC) are framework-3. The interval 117-118 (AR) is complementarity-determining-3.

As to quaternary structure, immunoglobulins are composed of two identical heavy chains and two identical light chains; disulfide-linked.

The protein resides in the secreted. Its subcellular location is the cell membrane. In terms of biological role, v region of the variable domain of immunoglobulin heavy chains that participates in the antigen recognition. Immunoglobulins, also known as antibodies, are membrane-bound or secreted glycoproteins produced by B lymphocytes. In the recognition phase of humoral immunity, the membrane-bound immunoglobulins serve as receptors which, upon binding of a specific antigen, trigger the clonal expansion and differentiation of B lymphocytes into immunoglobulins-secreting plasma cells. Secreted immunoglobulins mediate the effector phase of humoral immunity, which results in the elimination of bound antigens. The antigen binding site is formed by the variable domain of one heavy chain, together with that of its associated light chain. Thus, each immunoglobulin has two antigen binding sites with remarkable affinity for a particular antigen. The variable domains are assembled by a process called V-(D)-J rearrangement and can then be subjected to somatic hypermutations which, after exposure to antigen and selection, allow affinity maturation for a particular antigen. In Homo sapiens (Human), this protein is Immunoglobulin heavy variable 4-30-2.